A 207-amino-acid chain; its full sequence is SPRY domain-containing protein 4 (207 aa).

One can recognise a B30.2/SPRY domain in the interval 12-207; it reads YRWGTKRWGV…HSGLEVPKGL (196 aa). An N6-acetyllysine mark is found at K53 and K130. K139 carries the post-translational modification N6-succinyllysine.

The chain is SPRY domain-containing protein 4 (Spryd4) from Mus musculus (Mouse).